The following is a 105-amino-acid chain: Guanidinium exporter (105 aa).

Met1 is a topological domain (cytoplasmic). Residues 2–19 (SWIVLLIAGLLEVVWAIG) form a helical membrane-spanning segment. Over 20 to 28 (LKYTHGFTR) the chain is Periplasmic. Residues 29–48 (LTPSIITIAAMIVSIAMLSW) traverse the membrane as a helical segment. Topologically, residues 49–54 (AMRTLP) are cytoplasmic. A helical membrane pass occupies residues 55 to 77 (VGTAYAVWTGIGAVGAAITGILL). At 78–86 (LGESASPAR) the chain is on the periplasmic side. The chain crosses the membrane as a helical span at residues 87–104 (LLSLGLIVAGIIGLKLST). Position 105 (His105) is a topological domain, cytoplasmic.

This sequence belongs to the drug/metabolite transporter (DMT) superfamily. Small multidrug resistance (SMR) (TC 2.A.7.1) family. Gdx/SugE subfamily.

Its subcellular location is the cell inner membrane. In terms of biological role, guanidinium ion exporter. Couples guanidinium export to the proton motive force, exchanging one guanidinium ion for two protons. In Citrobacter freundii, this protein is Guanidinium exporter.